The following is a 237-amino-acid chain: Ribosomal RNA small subunit methyltransferase G (237 aa).

Residues glycine 78, phenylalanine 83, 129–130 (AE), and arginine 148 contribute to the S-adenosyl-L-methionine site. The tract at residues 218–237 (KKETPNKYPRKAGMPNKRPL) is disordered.

The protein belongs to the methyltransferase superfamily. RNA methyltransferase RsmG family.

Its subcellular location is the cytoplasm. Specifically methylates the N7 position of a guanine in 16S rRNA. This is Ribosomal RNA small subunit methyltransferase G from Streptococcus pneumoniae (strain JJA).